Reading from the N-terminus, the 990-residue chain is DNA ligase 4 (990 aa).

The tract at residues 57-84 is disordered; that stretch reads TQKKGRQPPGPRRKAGPHGHSNLSPHEA. E324, K326, L327, R331, E394, F436, E496, K501, K518, and K520 together coordinate ATP. K326 (N6-AMP-lysine intermediate) is an active-site residue. Residue E394 coordinates Mg(2+). Residue E496 coordinates Mg(2+). BRCT domains follow at residues 728–821 and 900–989; these read PQSK…LPYL and YMFS…RYQW.

It belongs to the ATP-dependent DNA ligase family. Mg(2+) serves as cofactor.

Its subcellular location is the nucleus. It carries out the reaction ATP + (deoxyribonucleotide)n-3'-hydroxyl + 5'-phospho-(deoxyribonucleotide)m = (deoxyribonucleotide)n+m + AMP + diphosphate.. Its function is as follows. DNA ligase involved in DNA non-homologous end joining (NHEJ); required for double-strand break (DSB) repair. This chain is DNA ligase 4 (LIG4), found in Phaeosphaeria nodorum (strain SN15 / ATCC MYA-4574 / FGSC 10173) (Glume blotch fungus).